We begin with the raw amino-acid sequence, 254 residues long: Type II methyl-directed restriction enzyme DpnI (254 aa).

It belongs to the DpnI type II restriction endonuclease family.

The enzyme catalyses Endonucleolytic cleavage of DNA to give specific double-stranded fragments with terminal 5'-phosphates.. Functionally, an M and P subtype restriction enzyme that recognizes the double-stranded, methylated sequence 5'-G(Me)ATC-3' and cleaves after A-2. In Streptococcus pneumoniae serotype 4 (strain ATCC BAA-334 / TIGR4), this protein is Type II methyl-directed restriction enzyme DpnI.